The primary structure comprises 570 residues: Polypeptide N-acetylgalactosaminyltransferase 2 (570 aa).

Over 1-6 (MRRRSR) the chain is Cytoplasmic. A helical; Signal-anchor for type II membrane protein membrane pass occupies residues 7–24 (MLLCFALLWVLGIAYYMY). Residues 25–570 (SGGGSALAAG…QWKFSLNLQQ (546 aa)) are Lumenal-facing. O-linked (Xyl...) (chondroitin sulfate) serine glycosylation occurs at Ser29. Disulfide bonds link Cys125/Cys353, Cys344/Cys422, Cys455/Cys472, and Cys495/Cys512. Positions 134 to 239 (LPATSVVITF…ERWLEPLLER (106 aa)) are catalytic subdomain A. Substrate is bound by residues Thr142, Asp175, and Arg200. Asp223 provides a ligand contact to Mn(2+). Position 224 (Ser224) interacts with substrate. His225 is a Mn(2+) binding site. The interval 299–361 (PIKTPMIAGG…PCSRVGHVFR (63 aa)) is catalytic subdomain B. A substrate-binding site is contributed by Trp330. Mn(2+) is bound at residue His358. Substrate is bound by residues Arg361, His364, and Tyr366. One can recognise a Ricin B-type lectin domain in the interval 442 to 565 (QDIAFGALQQ…PALSQQWKFS (124 aa)). Asn515 is a glycosylation site (N-linked (GlcNAc...) asparagine). Ser535 carries the post-translational modification Phosphoserine. A disulfide bond links Cys538 and Cys554.

Belongs to the glycosyltransferase 2 family. GalNAc-T subfamily. It depends on Mn(2+) as a cofactor. In terms of tissue distribution, widely expressed at high level.

It is found in the golgi apparatus. The protein resides in the golgi stack membrane. Its subcellular location is the secreted. It catalyses the reaction L-seryl-[protein] + UDP-N-acetyl-alpha-D-galactosamine = a 3-O-[N-acetyl-alpha-D-galactosaminyl]-L-seryl-[protein] + UDP + H(+). It carries out the reaction L-threonyl-[protein] + UDP-N-acetyl-alpha-D-galactosamine = a 3-O-[N-acetyl-alpha-D-galactosaminyl]-L-threonyl-[protein] + UDP + H(+). Its pathway is protein modification; protein glycosylation. In terms of biological role, catalyzes the initial reaction in O-linked oligosaccharide biosynthesis, the transfer of an N-acetyl-D-galactosamine residue to a serine or threonine residue on the protein receptor. Has a broad spectrum of substrates for peptides such as EA2, Muc5AC, Muc1a, Muc1b. Probably involved in O-linked glycosylation of the immunoglobulin A1 (IgA1) hinge region. Involved in O-linked glycosylation of APOC-III, ANGPTL3 and PLTP. It participates in the regulation of HDL-C metabolism. The protein is Polypeptide N-acetylgalactosaminyltransferase 2 (Galnt2) of Mus musculus (Mouse).